A 141-amino-acid polypeptide reads, in one-letter code: Hemoglobin subunit alpha-2 (141 aa).

The Globin domain occupies 1–141 (VLSSQDKANV…VKHVLTSKYR (141 aa)). His-58 lines the O2 pocket. His-87 contributes to the heme b binding site.

The protein belongs to the globin family. As to quaternary structure, minor hemoglobin is a heterotetramer of two alpha-2 chains and two beta-2 chains. Red blood cells.

Functionally, involved in oxygen transport from the lung to the various peripheral tissues. This chain is Hemoglobin subunit alpha-2, found in Triturus cristatus (Great crested newt).